The chain runs to 261 residues: Transmembrane protein 106A (261 aa).

Positions 1–23 (MGKAVSQLTSRKDEDKPILPDNP) are disordered. Residues 93 to 113 (LFVFLSVAICLLIFSLTIFFL) traverse the membrane as a helical segment.

It belongs to the TMEM106 family. In terms of tissue distribution, expressed in liver, spleen, lung, kidney, lymph nodes and adipose tissue (at protein level). Expressed by macrophages.

It localises to the cell membrane. Functionally, activates macrophages and polarizes them into M1-like macrophages through the activation of the MAPK and NF-kappaB signaling pathway. Upon activation, up-regulates the expression of CD80, CD86, CD69 and MHC II on macrophages, and induces the release of pro-inflammatory cytokines such as TNF, IL1B, IL6, CCL2 and nitric oxide. May play a role in inhibition of proliferation and migration. The sequence is that of Transmembrane protein 106A (Tmem106a) from Mus musculus (Mouse).